The chain runs to 184 residues: Ribosome-recycling factor (184 aa).

The tract at residues 133–153 (DSNDELKKQQKNSDITEDDLR) is disordered.

Belongs to the RRF family.

It is found in the cytoplasm. In terms of biological role, responsible for the release of ribosomes from messenger RNA at the termination of protein biosynthesis. May increase the efficiency of translation by recycling ribosomes from one round of translation to another. This chain is Ribosome-recycling factor, found in Staphylococcus saprophyticus subsp. saprophyticus (strain ATCC 15305 / DSM 20229 / NCIMB 8711 / NCTC 7292 / S-41).